The following is a 514-amino-acid chain: Probable peptidoglycan glycosyltransferase FtsW (514 aa).

9 consecutive transmembrane segments (helical) span residues 45–65 (IGLI…VTSA), 86–106 (IYIV…MQFW), 108–128 (TANP…LLVG), 137–157 (WLAL…FFFT), 182–202 (VVFF…TVVV), 218–238 (LWQF…LIVF), 301–321 (ILAE…ILWM), 347–367 (VGIW…GILP), and 373–393 (LPLV…VALL). Disordered regions lie at residues 411-437 (GDNK…RTKH) and 449-501 (DYNQ…AGIK).

It belongs to the SEDS family. FtsW subfamily.

It is found in the cell inner membrane. The enzyme catalyses [GlcNAc-(1-&gt;4)-Mur2Ac(oyl-L-Ala-gamma-D-Glu-L-Lys-D-Ala-D-Ala)](n)-di-trans,octa-cis-undecaprenyl diphosphate + beta-D-GlcNAc-(1-&gt;4)-Mur2Ac(oyl-L-Ala-gamma-D-Glu-L-Lys-D-Ala-D-Ala)-di-trans,octa-cis-undecaprenyl diphosphate = [GlcNAc-(1-&gt;4)-Mur2Ac(oyl-L-Ala-gamma-D-Glu-L-Lys-D-Ala-D-Ala)](n+1)-di-trans,octa-cis-undecaprenyl diphosphate + di-trans,octa-cis-undecaprenyl diphosphate + H(+). The protein operates within cell wall biogenesis; peptidoglycan biosynthesis. Peptidoglycan polymerase that is essential for cell division. This Alteromonas naphthalenivorans protein is Probable peptidoglycan glycosyltransferase FtsW.